The sequence spans 64 residues: Large ribosomal subunit protein uL29 (64 aa).

Belongs to the universal ribosomal protein uL29 family.

In Synechococcus elongatus (strain ATCC 33912 / PCC 7942 / FACHB-805) (Anacystis nidulans R2), this protein is Large ribosomal subunit protein uL29.